A 253-amino-acid chain; its full sequence is MPPAAPSVARSREGGGIGQRRLVFPKSARRTLPCPIALCLGLCLAAAAATTTRASAAAFASAGDTTAMSAFNLLHLVTKSQPVAPRACGLPSGSCRDKKNCKVVFSQQELRKRLTPLQYHVTQEKGTESAFEGEYTHHKDPGIYKCVVCGTPLFKSETKFDSGSGWPAFHDVISSEAIEFTDDFSYGMHRVETSCSQCGAHLGHIFDDGPRPTGKRYCINSASLSFTPADSSEAEGSGIKESGSPAAADRAEL.

Positions 1-56 (MPPAAPSVARSREGGGIGQRRLVFPKSARRTLPCPIALCLGLCLAAAAATTTRASA) are cleaved as a signal peptide. Lys-102 carries the N6-acetyllysine modification. Residues 107–229 (QQELRKRLTP…NSASLSFTPA (123 aa)) form the MsrB domain. 4 residues coordinate Zn(2+): Cys-146, Cys-149, Cys-195, and Cys-198. The Nucleophile role is filled by Cys-218. Residues 227–253 (TPADSSEAEGSGIKESGSPAAADRAEL) form a disordered region. Ser-244 is subject to Phosphoserine. Residues 250 to 253 (RAEL) carry the Endoplasmic reticulum retention signal motif.

This sequence belongs to the MsrB Met sulfoxide reductase family. In terms of assembly, monomer. The cofactor is Zn(2+). In terms of tissue distribution, widely expressed. Detected in the sensory epithelia of the organ of Corti and vestibular end organs as early as P2 up to adulthood (at protein level). In the organ of Corti, present in inner and outer hair cells and, to a lesser extent, in supporting cells (at protein level). In hair cells, distributed throughout the cell body. Barely detectable level in stereocilia. Also observed in spiral ganglion neurons, but not in the stria vascularis. In the vestibular end organs, found throughout the sensory epithelium, but more intense expression in hair cells than in supporting cells (at protein level). In vestibular hair cells, present within cell bodies and to a lesser extent in kinocilia. Barely detectable in stereocilia.

The protein localises to the endoplasmic reticulum. The catalysed reaction is L-methionyl-[protein] + [thioredoxin]-disulfide + H2O = L-methionyl-(R)-S-oxide-[protein] + [thioredoxin]-dithiol. It carries out the reaction [thioredoxin]-disulfide + L-methionine + H2O = L-methionine (R)-S-oxide + [thioredoxin]-dithiol. Functionally, catalyzes the reduction of free and protein-bound methionine sulfoxide to methionine. This chain is Methionine-R-sulfoxide reductase B3, mitochondrial (Msrb3), found in Mus musculus (Mouse).